Here is a 415-residue protein sequence, read N- to C-terminus: Heterogeneous nuclear ribonucleoprotein F (415 aa).

Methionine 1 carries the post-translational modification N-acetylmethionine. Methionine 2 carries the post-translational modification N-acetylmethionine; in Heterogeneous nuclear ribonucleoprotein F, N-terminally processed. Positions 13-85 (VKLRGLPWSC…ESMGHRYIEV (73 aa)) constitute an RRM 1 domain. A Glycyl lysine isopeptide (Lys-Gly) (interchain with G-Cter in SUMO) cross-link involves residue lysine 72. Residues 81-86 (RYIEVF) are interaction with RNA. A Glycyl lysine isopeptide (Lys-Gly) (interchain with G-Cter in SUMO2) cross-link involves residue lysine 87. Phosphoserine is present on residues serine 104, serine 107, and serine 161. Residues 111–188 (GFVRLRGLPF…RYIEVFKSSQ (78 aa)) enclose the RRM 2 domain. Lysine 167 participates in a covalent cross-link: Glycyl lysine isopeptide (Lys-Gly) (interchain with G-Cter in SUMO2). Residues 179–184 (RYIEVF) form an interaction with RNA region. Residue lysine 185 forms a Glycyl lysine isopeptide (Lys-Gly) (interchain with G-Cter in SUMO2) linkage. Phosphoserine is present on residues serine 187, serine 193, and serine 195. An N6-acetyllysine; alternate modification is found at lysine 200. A Glycyl lysine isopeptide (Lys-Gly) (interchain with G-Cter in SUMO2); alternate cross-link involves residue lysine 200. Position 215 is a phosphothreonine (threonine 215). At lysine 224 the chain carries N6-acetyllysine; alternate. A Glycyl lysine isopeptide (Lys-Gly) (interchain with G-Cter in SUMO2); alternate cross-link involves residue lysine 224. Serine 265 carries the phosphoserine modification. In terms of domain architecture, RRM 3 spans 289–366 (HCVHMRGLPY…IELFLNSTTG (78 aa)). An interaction with RNA region spans residues 355–360 (RYIELF).

As to quaternary structure, identified in the spliceosome C complex. Interacts with AGO1, AGO2, TBP and TXNL4/DIM1. Post-translationally, sumoylated.

The protein resides in the nucleus. It localises to the nucleoplasm. Component of the heterogeneous nuclear ribonucleoprotein (hnRNP) complexes which provide the substrate for the processing events that pre-mRNAs undergo before becoming functional, translatable mRNAs in the cytoplasm. Plays a role in the regulation of alternative splicing events. Binds G-rich sequences in pre-mRNAs and keeps target RNA in an unfolded state. This chain is Heterogeneous nuclear ribonucleoprotein F (HNRNPF), found in Macaca fascicularis (Crab-eating macaque).